A 229-amino-acid chain; its full sequence is MILTDPEWQAVLLSLKVSSLAVLFSLPFGIFFAWLLVRCTFPGKALLDSVLHLPLVLPPVVVGYLLLVSMGRRGFIGERLYDWFGITFAFSWRGAVLAAAVMSFPLMVRAIRLALEGVDVKLEQAARTLGAGRWRVFFTITLPLTLPGIIVGTVLAFARSLGEFGATITFVSNIPGETRTIPSAMYTLIQTPGGESGAARLCIISIALAMISLLISEWLARISRERAGR.

The Periplasmic portion of the chain corresponds to 1 to 16 (MILTDPEWQAVLLSLK). An ABC transmembrane type-1 domain is found at 11–219 (VLLSLKVSSL…MISLLISEWL (209 aa)). The chain crosses the membrane as a helical span at residues 17-37 (VSSLAVLFSLPFGIFFAWLLV). At 38-49 (RCTFPGKALLDS) the chain is on the cytoplasmic side. The helical transmembrane segment at 50 to 70 (VLHLPLVLPPVVVGYLLLVSM) threads the bilayer. Topologically, residues 71-83 (GRRGFIGERLYDW) are periplasmic. A helical membrane pass occupies residues 84–104 (FGITFAFSWRGAVLAAAVMSF). Residues 105–136 (PLMVRAIRLALEGVDVKLEQAARTLGAGRWRV) lie on the Cytoplasmic side of the membrane. A helical transmembrane segment spans residues 137 to 157 (FFTITLPLTLPGIIVGTVLAF). Over 158-201 (ARSLGEFGATITFVSNIPGETRTIPSAMYTLIQTPGGESGAARL) the chain is Periplasmic. The helical transmembrane segment at 202–222 (CIISIALAMISLLISEWLARI) threads the bilayer. Residues 223-229 (SRERAGR) lie on the Cytoplasmic side of the membrane.

This sequence belongs to the binding-protein-dependent transport system permease family. CysTW subfamily.

It is found in the cell inner membrane. Functionally, part of the binding-protein-dependent transport system for molybdenum; probably responsible for the translocation of the substrate across the membrane. This is Molybdenum transport system permease protein ModB (modB) from Escherichia coli O157:H7.